The chain runs to 36 residues: Serum amyloid P-component (36 aa).

Residues 6–36 form the Pentraxin (PTX) domain; the sequence is SGKVFVIPMATSTSHVKLHARVSEPISAMTM.

This sequence belongs to the pentraxin family. As to quaternary structure, homopentamer. Discoid arrangement of 5 covalently bound subunits. Requires Ca(2+) as cofactor.

Its subcellular location is the secreted. The protein is Serum amyloid P-component of Salmo salar (Atlantic salmon).